We begin with the raw amino-acid sequence, 145 residues long: Large ribosomal subunit protein uL13 (145 aa).

This sequence belongs to the universal ribosomal protein uL13 family. In terms of assembly, part of the 50S ribosomal subunit.

Functionally, this protein is one of the early assembly proteins of the 50S ribosomal subunit, although it is not seen to bind rRNA by itself. It is important during the early stages of 50S assembly. The polypeptide is Large ribosomal subunit protein uL13 (Bacillus velezensis (strain DSM 23117 / BGSC 10A6 / LMG 26770 / FZB42) (Bacillus amyloliquefaciens subsp. plantarum)).